Here is a 1402-residue protein sequence, read N- to C-terminus: DNA-directed RNA polymerase subunit beta' (1402 aa).

Cys72, Cys74, Cys87, and Cys90 together coordinate Zn(2+). Mg(2+)-binding residues include Asp463, Asp465, and Asp467. Positions 811, 885, 892, and 895 each coordinate Zn(2+).

It belongs to the RNA polymerase beta' chain family. The RNAP catalytic core consists of 2 alpha, 1 beta, 1 beta' and 1 omega subunit. When a sigma factor is associated with the core the holoenzyme is formed, which can initiate transcription. Mg(2+) is required as a cofactor. Requires Zn(2+) as cofactor.

The enzyme catalyses RNA(n) + a ribonucleoside 5'-triphosphate = RNA(n+1) + diphosphate. DNA-dependent RNA polymerase catalyzes the transcription of DNA into RNA using the four ribonucleoside triphosphates as substrates. This Paracoccus denitrificans (strain Pd 1222) protein is DNA-directed RNA polymerase subunit beta'.